A 224-amino-acid chain; its full sequence is 7-cyano-7-deazaguanine synthase (224 aa).

12 to 22 (MSGGMDSTLGA) contributes to the ATP binding site. Zn(2+) contacts are provided by Cys191, Cys199, Cys202, and Cys205.

Belongs to the QueC family. Zn(2+) is required as a cofactor.

It catalyses the reaction 7-carboxy-7-deazaguanine + NH4(+) + ATP = 7-cyano-7-deazaguanine + ADP + phosphate + H2O + H(+). It functions in the pathway purine metabolism; 7-cyano-7-deazaguanine biosynthesis. Catalyzes the ATP-dependent conversion of 7-carboxy-7-deazaguanine (CDG) to 7-cyano-7-deazaguanine (preQ(0)). This is 7-cyano-7-deazaguanine synthase from Sulfurimonas denitrificans (strain ATCC 33889 / DSM 1251) (Thiomicrospira denitrificans (strain ATCC 33889 / DSM 1251)).